Consider the following 507-residue polypeptide: Archaeal-type glutamate synthase [NADPH] (507 aa).

4Fe-4S ferredoxin-type domains follow at residues 10–39 (FVVERDDYKCIRCLACVRVCSYGANYYDEN) and 41–70 (NRVYTENYKCVGCHFCEAICPTEAITVRRN). Residues C19, C22, C25, C29, C50, C53, C56, and C60 each coordinate [4Fe-4S] cluster.

It belongs to the glutamate synthase family. FMN serves as cofactor.

The catalysed reaction is 2 L-glutamate + NADP(+) = L-glutamine + 2-oxoglutarate + NADPH + H(+). The chain is Archaeal-type glutamate synthase [NADPH] from Thermotoga neapolitana (strain ATCC 49049 / DSM 4359 / NBRC 107923 / NS-E).